A 153-amino-acid chain; its full sequence is Vasotocin-neurophysin VT 1 (153 aa).

The first 19 residues, 1–19 (MPQCALLLSLLGLLALSSA), serve as a signal peptide directing secretion. A disulfide bridge connects residues C20 and C25. G28 is subject to Glycine amide. Intrachain disulfides connect C41–C85, C44–C58, C52–C75, C59–C65, C92–C105, C99–C117, and C106–C111.

Belongs to the vasopressin/oxytocin family. Seven disulfide bonds are present in neurophysin.

It localises to the secreted. In terms of biological role, vasotocin is probably an antidiuretic hormone. The polypeptide is Vasotocin-neurophysin VT 1 (Takifugu rubripes (Japanese pufferfish)).